Consider the following 243-residue polypeptide: 23S rRNA (guanosine-2'-O-)-methyltransferase RlmB (243 aa).

Residues G196, I216, and L225 each contribute to the S-adenosyl-L-methionine site.

This sequence belongs to the class IV-like SAM-binding methyltransferase superfamily. RNA methyltransferase TrmH family. RlmB subfamily. In terms of assembly, homodimer.

The protein localises to the cytoplasm. The catalysed reaction is guanosine(2251) in 23S rRNA + S-adenosyl-L-methionine = 2'-O-methylguanosine(2251) in 23S rRNA + S-adenosyl-L-homocysteine + H(+). Specifically methylates the ribose of guanosine 2251 in 23S rRNA. This Salmonella typhimurium (strain LT2 / SGSC1412 / ATCC 700720) protein is 23S rRNA (guanosine-2'-O-)-methyltransferase RlmB.